Consider the following 29-residue polypeptide: Omega-conotoxin MVIIC (29 aa).

The propeptide occupies 1 to 2 (TR). 3 disulfides stabilise this stretch: cysteine 3–cysteine 18, cysteine 10–cysteine 22, and cysteine 17–cysteine 28. At cysteine 28 the chain carries Cysteine amide.

This sequence belongs to the conotoxin O1 superfamily. In terms of processing, not hydroxylated; hydroxylation, on a synthetic hydroxylated MVIIC, has a significant impact on the oxidative folding but not on the biological activity. In terms of tissue distribution, expressed by the venom duct.

It is found in the secreted. Functionally, omega-conotoxins act at presynaptic membranes, they bind and block voltage-gated calcium channels (Cav). This toxin preferentially blocks P/Q-type calcium channels (Cav2.1/CACNA1A) (IC(50)=0.60 nM). Also shows an inhibition on Cav2.2/CACNA1A channels (IC(50)=7.0 nM). The sequence is that of Omega-conotoxin MVIIC from Conus magus (Magical cone).